We begin with the raw amino-acid sequence, 111 residues long: Cytochrome c (111 aa).

At alanine 1 the chain carries N-acetylalanine. Heme c-binding residues include cysteine 22, cysteine 25, and histidine 26. Lysine 80 is subject to N6,N6,N6-trimethyllysine. Methionine 88 contacts heme c. The residue at position 94 (lysine 94) is an N6,N6,N6-trimethyllysine.

Belongs to the cytochrome c family. Post-translationally, binds 1 heme c group covalently per subunit.

The protein localises to the mitochondrion intermembrane space. Functionally, electron carrier protein. The oxidized form of the cytochrome c heme group can accept an electron from the heme group of the cytochrome c1 subunit of cytochrome reductase. Cytochrome c then transfers this electron to the cytochrome oxidase complex, the final protein carrier in the mitochondrial electron-transport chain. The polypeptide is Cytochrome c (Vigna radiata var. radiata (Mung bean)).